Reading from the N-terminus, the 375-residue chain is 23S rRNA (uracil(747)-C(5))-methyltransferase RlmC (375 aa).

C3, C11, C14, and C87 together coordinate [4Fe-4S] cluster. 4 residues coordinate S-adenosyl-L-methionine: Q212, F241, E262, and N307. Catalysis depends on C334, which acts as the Nucleophile.

This sequence belongs to the class I-like SAM-binding methyltransferase superfamily. RNA M5U methyltransferase family. RlmC subfamily.

It carries out the reaction uridine(747) in 23S rRNA + S-adenosyl-L-methionine = 5-methyluridine(747) in 23S rRNA + S-adenosyl-L-homocysteine + H(+). Its function is as follows. Catalyzes the formation of 5-methyl-uridine at position 747 (m5U747) in 23S rRNA. The chain is 23S rRNA (uracil(747)-C(5))-methyltransferase RlmC from Serratia proteamaculans (strain 568).